The following is a 689-amino-acid chain: Glycine--tRNA ligase beta subunit (689 aa).

It belongs to the class-II aminoacyl-tRNA synthetase family. As to quaternary structure, tetramer of two alpha and two beta subunits.

Its subcellular location is the cytoplasm. It catalyses the reaction tRNA(Gly) + glycine + ATP = glycyl-tRNA(Gly) + AMP + diphosphate. The sequence is that of Glycine--tRNA ligase beta subunit from Acinetobacter baumannii (strain ATCC 17978 / DSM 105126 / CIP 53.77 / LMG 1025 / NCDC KC755 / 5377).